A 1255-amino-acid polypeptide reads, in one-letter code: Mucin-1 (1255 aa).

The first 23 residues, 1–23 (MTPGTQSPFFLLLLLTVLTVVTG), serve as a signal peptide directing secretion. Residues 23–1033 (GSGHASSTPG…PLTSSNHSTS (1011 aa)) form a disordered region. The Extracellular portion of the chain corresponds to 24 to 1158 (SGHASSTPGG…SAQSGAGVPG (1135 aa)). The span at 38 to 54 (SATQRSSVPSSTEKNAV) shows a compositional bias: polar residues. Over residues 55-75 (SMTSSVLSSHSPGSGSSTTQG) the composition is skewed to low complexity. The stretch at 61–80 (LSSHSPGSGSSTTQGQDVTL) is one 1; approximate repeat. A 2; approximate repeat occupies 81 to 100 (APATEPASGSAATWGQDVTS). The segment covering 90-102 (SAATWGQDVTSVP) has biased composition (polar residues). 43 consecutive repeat copies span residues 101-120 (VPVT…DVTS), 121-140 (APDN…GVTS), 141-160 (APDT…GVTS), 161-180 (APDT…GVTS), 181-200 (APDT…GVTS), 201-220 (APDT…GVTS), 221-240 (APDT…GVTS), 241-260 (APDT…GVTS), 261-280 (APDT…GVTS), 281-300 (APDT…GVTS), 301-320 (APDT…GVTS), 321-340 (APDT…GVTS), 341-360 (APDT…GVTS), 361-380 (APDT…GVTS), 381-400 (APDT…GVTS), 401-420 (APDT…GVTS), 421-440 (APDT…GVTS), 441-460 (APDT…GVTS), 461-480 (APDT…GVTS), 481-500 (APDT…GVTS), 501-520 (APDT…GVTS), 521-540 (APDT…GVTS), 541-560 (APDT…GVTS), 561-580 (APDT…GVTS), 581-600 (APDT…GVTS), 601-620 (APDT…GVTS), 621-640 (APDT…GVTS), 641-660 (APDT…GVTS), 661-680 (APDT…GVTS), 681-700 (APDT…GVTS), 701-720 (APDT…GVTS), 721-740 (APDT…GVTS), 741-760 (APDT…GVTS), 761-780 (APDT…GVTS), 781-800 (APDT…GVTS), 801-820 (APDT…GVTS), 821-840 (APDT…GVTS), 841-860 (APDT…GVTS), 861-880 (APDT…GVTS), 881-900 (APDT…GVTS), 901-920 (APDT…GVTS), 921-940 (APDT…GVTS), and 941-960 (APDN…NVTS). Positions 126 to 965 (PAPGSTAPPA…HNVTSASGSA (840 aa)) are 42 X 20 AA approximate tandem repeats of P-A-P-G-S-T-A-P-P-A-H-G-V-T-S-A-P-D-T-R. 2 O-linked (GalNAc...) threonine glycosylation sites follow: T131 and T139. Residue S140 is glycosylated (O-linked (GalNAc...) serine). O-linked (GalNAc...) threonine glycosylation is present at T144. Residue N957 is glycosylated (N-linked (GlcNAc...) asparagine). Residues 960–970 (SASGSASGSAS) are compositionally biased toward low complexity. The stretch at 961–980 (ASGSASGSASTLVHNGTSAR) is one 46; approximate repeat. Composition is skewed to polar residues over residues 971-993 (TLVH…TPFS) and 1001-1033 (TPTT…HSTS). An N-linked (GlcNAc...) asparagine glycan is attached at N975. Residues 981–1000 (ATTTPASKSTPFSIPSHHSD) form a 47; approximate repeat. The 48; approximate repeat unit spans residues 1001–1020 (TPTTLASHSTKTDASSTHHS). Residues N1029, N1055, and N1133 are each glycosylated (N-linked (GlcNAc...) asparagine). The region spanning 1039–1148 (GVSFFFLSFH…VSVSDVPFPF (110 aa)) is the SEA domain. Residues 1159–1181 (WGIALLVLVCVLVALAIVYLIAL) traverse the membrane as a helical segment. Residues 1182–1255 (AVCQCRRKNY…PAVAATSANL (74 aa)) lie on the Cytoplasmic side of the membrane. S-palmitoyl cysteine attachment occurs at residues C1184 and C1186. Residues 1192–1228 (GQLDIFPARDTYHPMSEYPTYHTHGRYVPPSSTDRSP) are interaction with P53. At Y1203 the chain carries Phosphotyrosine; by PDGFR. Residues 1203–1206 (YHPM) carry the Interaction with GRB2 motif. A Phosphotyrosine modification is found at Y1212. The interval 1214-1237 (THGRYVPPSSTDRSPYEKVSAGNG) is disordered. Y1218 is modified (phosphotyrosine; by PDGFR). The required for interaction with GSK3B stretch occupies residues 1223 to 1230 (STDRSPYE). At T1224 the chain carries Phosphothreonine; by PKC/PRKCD. Phosphoserine; by GSK3-beta is present on S1227. Y1229 carries the phosphotyrosine; by CSK, EGFR and SRC modification. Residues 1229 to 1232 (YEKV) carry the Interaction with SRC and ESR1 motif. Residues 1233-1241 (SAGNGGSSL) are required for interaction with beta- and gamma-catenins. Residue Y1243 is modified to Phosphotyrosine. The short motif at 1243–1246 (YTNP) is the Required for interaction with AP1S2 element.

As to quaternary structure, the alpha subunit forms a tight, non-covalent heterodimeric complex with the proteolytically-released beta-subunit. Interaction, via the tandem repeat region, with domain 1 of ICAM1 is implicated in cell migration and metastases. Isoform 1 binds directly the SH2 domain of GRB2, and forms a MUC1/GRB2/SOS1 complex involved in RAS signaling. The cytoplasmic tail (MUC1CT) interacts with several proteins such as SRC, CTNNB1 and ERBs. Interaction with the SH2 domain of CSK decreases interaction with GSK3B. Interacts with CTNNB1/beta-catenin and JUP/gamma-catenin and promotes cell adhesion. Interaction with JUP/gamma-catenin is induced by heregulin. Binds PRKCD, ERBB2, ERBB3 and ERBB4. Heregulin (HRG) stimulates the interaction with ERBB2 and, to a much lesser extent, the interaction with ERBB3 and ERBB4. Interacts with P53 in response to DNA damage. Interacts with KLF4. Interacts with estrogen receptor alpha/ESR1, through its DNA-binding domain, and stimulates its transcription activity. Binds ADAM17. Isoform ZD forms disulfide-linked oligomers. In terms of processing, highly glycosylated (N- and O-linked carbohydrates and sialic acid). O-glycosylated to a varying degree on serine and threonine residues within each tandem repeat, ranging from mono- to penta-glycosylation. The average density ranges from about 50% in human milk to over 90% in T47D breast cancer cells. Further sialylation occurs during recycling. Membrane-shed glycoproteins from kidney and breast cancer cells have preferentially sialyated core 1 structures, while secreted forms from the same tissues display mainly core 2 structures. The O-glycosylated content is overlapping in both these tissues with terminal fucose and galactose, 2- and 3-linked galactose, 3- and 3,6-linked GalNAc-ol and 4-linked GlcNAc predominating. Differentially O-glycosylated in breast carcinomas with 3,4-linked GlcNAc. N-glycosylation consists of high-mannose, acidic complex-type and hybrid glycans in the secreted form MUC1/SEC, and neutral complex-type in the transmembrane form, MUC1/TM. Post-translationally, proteolytic cleavage in the SEA domain occurs in the endoplasmic reticulum by an autoproteolytic mechanism and requires the full-length SEA domain as well as requiring a Ser, Thr or Cys residue at the P + 1 site. Cleavage at this site also occurs on isoform MUC1/X but not on isoform MUC1/Y. Ectodomain shedding is mediated by ADAM17. Dual palmitoylation on cysteine residues in the CQC motif is required for recycling from endosomes back to the plasma membrane. In terms of processing, phosphorylated on tyrosines and serine residues in the C-terminal. Phosphorylation on tyrosines in the C-terminal increases the nuclear location of MUC1 and beta-catenin. Phosphorylation by PKC delta induces binding of MUC1 to beta-catenin/CTNNB1 and thus decreases the formation of the beta-catenin/E-cadherin complex. Src-mediated phosphorylation inhibits interaction with GSK3B. Src- and EGFR-mediated phosphorylation on Tyr-1229 increases binding to beta-catenin/CTNNB1. GSK3B-mediated phosphorylation on Ser-1227 decreases this interaction but restores the formation of the beta-cadherin/E-cadherin complex. On T-cell receptor activation, phosphorylated by LCK. PDGFR-mediated phosphorylation increases nuclear colocalization of MUC1CT and CTNNB1. Post-translationally, the N-terminal sequence has been shown to begin at position 24 or 28. In terms of tissue distribution, expressed on the apical surface of epithelial cells, especially of airway passages, breast and uterus. Also expressed in activated and unactivated T-cells. Overexpressed in epithelial tumors, such as breast or ovarian cancer and also in non-epithelial tumor cells. Isoform Y is expressed in tumor cells only.

It localises to the apical cell membrane. It is found in the secreted. The protein resides in the cell membrane. The protein localises to the cytoplasm. Its subcellular location is the nucleus. Its function is as follows. The alpha subunit has cell adhesive properties. Can act both as an adhesion and an anti-adhesion protein. May provide a protective layer on epithelial cells against bacterial and enzyme attack. In terms of biological role, the beta subunit contains a C-terminal domain which is involved in cell signaling, through phosphorylations and protein-protein interactions. Modulates signaling in ERK, SRC and NF-kappa-B pathways. In activated T-cells, influences directly or indirectly the Ras/MAPK pathway. Promotes tumor progression. Regulates TP53-mediated transcription and determines cell fate in the genotoxic stress response. Binds, together with KLF4, the PE21 promoter element of TP53 and represses TP53 activity. The chain is Mucin-1 (MUC1) from Homo sapiens (Human).